The primary structure comprises 294 residues: Acetyl-coenzyme A carboxylase carboxyl transferase subunit beta (294 aa).

In terms of domain architecture, CoA carboxyltransferase N-terminal spans 30 to 294; the sequence is IMTKCPECKK…PGVGGEVDGE (265 aa). Zn(2+)-binding residues include C34, C37, C53, and C56. Residues 34–56 form a C4-type zinc finger; it reads CPECKKIMYTKELQKNLMVCNYC.

It belongs to the AccD/PCCB family. As to quaternary structure, acetyl-CoA carboxylase is a heterohexamer composed of biotin carboxyl carrier protein (AccB), biotin carboxylase (AccC) and two subunits each of ACCase subunit alpha (AccA) and ACCase subunit beta (AccD). Zn(2+) is required as a cofactor.

The protein resides in the cytoplasm. It catalyses the reaction N(6)-carboxybiotinyl-L-lysyl-[protein] + acetyl-CoA = N(6)-biotinyl-L-lysyl-[protein] + malonyl-CoA. It functions in the pathway lipid metabolism; malonyl-CoA biosynthesis; malonyl-CoA from acetyl-CoA: step 1/1. Functionally, component of the acetyl coenzyme A carboxylase (ACC) complex. Biotin carboxylase (BC) catalyzes the carboxylation of biotin on its carrier protein (BCCP) and then the CO(2) group is transferred by the transcarboxylase to acetyl-CoA to form malonyl-CoA. The protein is Acetyl-coenzyme A carboxylase carboxyl transferase subunit beta of Listeria monocytogenes serovar 1/2a (strain ATCC BAA-679 / EGD-e).